A 59-amino-acid chain; its full sequence is Aedesin (59 aa).

The N-terminal stretch at 1-23 (MNFTKLFAIVLLAALVLLGQTEA) is a signal peptide.

Belongs to the cecropin family. In terms of tissue distribution, salivary gland (at protein level).

The protein localises to the secreted. In terms of biological role, antimicrobial peptide. Exhibits antibacterial activity against Gram-negative bacteria, such as Escherichia coli, Pseudomonas aeruginosa, Acinetobacter baumannii and Klebsiella pneumoniae. Shows no antibacterial effects against Gram-positive bacteria, such as Staphylococcus aureus, Enterococcus faecalis and Enterococcus faecium. Exhibits antiviral activity against all four dengue virus serotypes and chikungunya virus. Exhibits leishmanicidal activity. Partially neutralizes lipopolysaccharides (LPS). Exhibits anti-inflammatory properties: inhibits LPS-induced iNOS/NOS2 transcription, nitric oxide (NO) and pro-inflammatory cytokine production in mouse macrophages and human peripheral blood mononuclear cells (PBMCs); inhibits LPS-induced activation of MAPK and NF-kappa-B signaling pathways in mouse macrophages. The polypeptide is Aedesin (Aedes aegypti (Yellowfever mosquito)).